The sequence spans 255 residues: MGNSCYNIVATLLLVLNFERTRSLQDPCSNCPAGTFCDNNRNQICSPCPPNSFSSAGGQRTCDICRQCKGVFRTRKECSSTSNAECDCTPGFHCLGAGCSMCEQDCKQGQELTKKGCKDCCFGTFNDQKRGICRPWTNCSLDGKSVLVNGTKERDVVCGPSPADLSPGASSVTPPAPAREPGHSPQIISFFLALTSTALLFLLFFLTLRFSVVKRGRKKLLYIFKQPFMRPVQTTQEEDGCSCRFPEEEEGGCEL.

The signal sequence occupies residues Met-1–Ser-23. 4 TNFR-Cys repeats span residues Leu-24–Cys-45, Pro-47–Cys-86, Asp-87–Lys-118, and Asp-119–Gly-159. At Leu-24–Gln-186 the chain is on the extracellular side. 9 cysteine pairs are disulfide-bonded: Cys-28–Cys-37, Cys-31–Cys-45, Cys-48–Cys-62, Cys-65–Cys-78, Cys-68–Cys-86, Cys-88–Cys-94, Cys-99–Cys-106, Cys-102–Cys-117, and Cys-121–Cys-133. Asn-138 and Asn-149 each carry an N-linked (GlcNAc...) asparagine glycan. A disulfide bridge connects residues Cys-139 and Cys-158. The interval Ser-161–Glu-180 is disordered. Residues Ile-187 to Val-213 traverse the membrane as a helical segment. Over Lys-214 to Leu-255 the chain is Cytoplasmic. The interaction with LRR-1 stretch occupies residues Lys-214–Leu-255.

As to quaternary structure, predominantly homodimeric, but may also exist as a monomer. Interacts with TRAF1, TRAF2 and TRAF3. Interacts with LRR-repeat protein 1/LRR-1. In terms of tissue distribution, expressed on the surface of activated T-cells.

The protein localises to the cell membrane. Its function is as follows. Receptor for TNFSF9/4-1BBL. Conveys a signal that enhances CD8(+) T-cell survival, cytotoxicity, and mitochondrial activity, thereby promoting immunity against viruses and tumors. The protein is Tumor necrosis factor receptor superfamily member 9 (TNFRSF9) of Homo sapiens (Human).